The following is a 342-amino-acid chain: D-alanine--D-alanine ligase (342 aa).

Residues Lys-132–Asn-326 form the ATP-grasp domain. Position 159-210 (Glu-159–Tyr-210) interacts with ATP. Positions 282, 294, and 296 each coordinate Mg(2+).

This sequence belongs to the D-alanine--D-alanine ligase family. Mg(2+) is required as a cofactor. It depends on Mn(2+) as a cofactor.

The protein localises to the cytoplasm. It carries out the reaction 2 D-alanine + ATP = D-alanyl-D-alanine + ADP + phosphate + H(+). It functions in the pathway cell wall biogenesis; peptidoglycan biosynthesis. Functionally, cell wall formation. This Nitratiruptor sp. (strain SB155-2) protein is D-alanine--D-alanine ligase.